We begin with the raw amino-acid sequence, 432 residues long: Transcriptional adapter 3 (432 aa).

A Glycyl lysine isopeptide (Lys-Gly) (interchain with G-Cter in SUMO2) cross-link involves residue Lys21. Residues 40-69 adopt a coiled-coil conformation; it reads IEELDTLQLELETLLSSASRRLRVLEAETQ. The disordered stretch occupies residues 87–127; that stretch reads GRDHELGAPPKHGKPKKQKLEGKTGHGPGPGPGRPKSKNVQ. Lys129 is covalently cross-linked (Glycyl lysine isopeptide (Lys-Gly) (interchain with G-Cter in SUMO2)). A disordered region spans residues 272–319; sequence NIISPMEDSPIPDMSGKESGADGASTSPRNQNKPFSVPHTKSLESRIK. Ser280 and Ser298 each carry phosphoserine. The span at 295–305 shows a compositional bias: polar residues; that stretch reads ASTSPRNQNKP. A coiled-coil region spans residues 367-407; the sequence is LLRLAKEEVSRQELRQRVRMADNEVMDAFRKIMAARQKKRT. Position 418 is an N6-acetyllysine (Lys418).

This sequence belongs to the NGG1 family. In terms of assembly, the PCAF complex is composed of a number of TBP-associated factors (TAFS), such as TAF5, TAF5L, TAF6, TAF6L, TAF9, TAF10 and TAF12, PCAF, and also PCAF-associated factors (PAFs), such as TADA2L/ADA2, TADA3L/ADA3 and SPT3. Interacts directly with TADA2L and PCAF and also with the high-risk HPV oncoprotein E6. Component of the STAGA transcription coactivator-HAT complex, at least composed of SUPT3H, GCN5L2, TAF5L, TAF6L, SUPT7L, TADA3L, TAD1L, TAF10, TAF12, TRRAP and TAF9. Component of the TFTC-HAT complex. Component of the ADA2A-containing complex (ATAC), composed of KAT14, KAT2A, TADA2L, TADA3L, ZZ3, MBIP, WDR5, YEATS2, CCDC101 and DR1.

It localises to the nucleus. Functions as a component of the PCAF complex. The PCAF complex is capable of efficiently acetylating histones in a nucleosomal context. The PCAF complex could be considered as the human version of the yeast SAGA complex. Also known as a coactivator for p53/TP53-dependent transcriptional activation. Component of the ATAC complex, a complex with histone acetyltransferase activity on histones H3 and H4. In Mus musculus (Mouse), this protein is Transcriptional adapter 3 (Tada3).